The sequence spans 145 residues: Transcriptional regulator SlyA (145 aa).

The region spanning 2–135 (ELPLGSDLAR…LALLVARLEK (134 aa)) is the HTH marR-type domain. The H-T-H motif DNA-binding region spans 49-72 (QIQLAKAIGIEQPSLVRTLDQLEE).

This sequence belongs to the SlyA family. Homodimer.

Transcription regulator that can specifically activate or repress expression of target genes. In Pectobacterium carotovorum subsp. carotovorum (strain PC1), this protein is Transcriptional regulator SlyA.